The following is a 159-amino-acid chain: Phosphopantetheine adenylyltransferase (159 aa).

T10 is a binding site for substrate. Residues 10–11 (TF) and H18 contribute to the ATP site. Substrate is bound by residues K42, M74, and R88. ATP is bound by residues 89–91 (GLR), E99, and 124–130 (WSFISSS).

This sequence belongs to the bacterial CoaD family. Homohexamer. The cofactor is Mg(2+).

It is found in the cytoplasm. It carries out the reaction (R)-4'-phosphopantetheine + ATP + H(+) = 3'-dephospho-CoA + diphosphate. It participates in cofactor biosynthesis; coenzyme A biosynthesis; CoA from (R)-pantothenate: step 4/5. Reversibly transfers an adenylyl group from ATP to 4'-phosphopantetheine, yielding dephospho-CoA (dPCoA) and pyrophosphate. In Klebsiella pneumoniae (strain 342), this protein is Phosphopantetheine adenylyltransferase.